The primary structure comprises 398 residues: Probable aminomethyltransferase (398 aa).

This sequence belongs to the GcvT family. As to quaternary structure, the glycine cleavage system is composed of four proteins: P, T, L and H.

It carries out the reaction N(6)-[(R)-S(8)-aminomethyldihydrolipoyl]-L-lysyl-[protein] + (6S)-5,6,7,8-tetrahydrofolate = N(6)-[(R)-dihydrolipoyl]-L-lysyl-[protein] + (6R)-5,10-methylene-5,6,7,8-tetrahydrofolate + NH4(+). Functionally, the glycine cleavage system catalyzes the degradation of glycine. This is Probable aminomethyltransferase from Pyrococcus horikoshii (strain ATCC 700860 / DSM 12428 / JCM 9974 / NBRC 100139 / OT-3).